A 554-amino-acid polypeptide reads, in one-letter code: Glucose-6-phosphate isomerase 1 (554 aa).

Glutamate 359 (proton donor) is an active-site residue. Catalysis depends on residues histidine 390 and lysine 518.

This sequence belongs to the GPI family.

Its subcellular location is the cytoplasm. It carries out the reaction alpha-D-glucose 6-phosphate = beta-D-fructose 6-phosphate. Its pathway is carbohydrate biosynthesis; gluconeogenesis. The protein operates within carbohydrate degradation; glycolysis; D-glyceraldehyde 3-phosphate and glycerone phosphate from D-glucose: step 2/4. Functionally, catalyzes the reversible isomerization of glucose-6-phosphate to fructose-6-phosphate. This chain is Glucose-6-phosphate isomerase 1, found in Pseudomonas putida (strain ATCC 47054 / DSM 6125 / CFBP 8728 / NCIMB 11950 / KT2440).